The chain runs to 347 residues: Dual specificity mitogen-activated protein kinase kinase 3 (347 aa).

Position 1 is an N-acetylmethionine (methionine 1). Over residues 1-15 the composition is skewed to low complexity; sequence MESPASSQPASMPQS. A disordered region spans residues 1–46; that stretch reads MESPASSQPASMPQSKGKSKRKKDLRISCMSKPPAPNPTPPRNLDS. A phosphoserine mark is found at serine 3 and serine 15. The region spanning 64–325 is the Protein kinase domain; the sequence is LVTISELGRG…YLELMEHPFF (262 aa). ATP is bound by residues 70–78 and lysine 93; that span reads LGRGAYGVV. Aspartate 190 (proton acceptor) is an active-site residue. Serine 218 carries the post-translational modification Phosphoserine. Phosphothreonine is present on threonine 222.

Belongs to the protein kinase superfamily. STE Ser/Thr protein kinase family. MAP kinase kinase subfamily. Component of a signaling complex containing at least AKAP13, PKN1, MAPK14, ZAK and MAP2K3. Within this complex, AKAP13 interacts directly with PKN1, which in turn recruits MAPK14, MAP2K3 and ZAK. Binds to DYRK1B/MIRK and increases its kinase activity. Part of a complex with MAP3K3, RAC1 and CCM2. Interacts with ARRB1. As to quaternary structure, (Microbial infection) Interacts with Yersinia YopJ. In terms of processing, autophosphorylated. Phosphorylation on Ser-218 and Thr-222 by MAP kinase kinase kinases positively regulates the kinase activity. Phosphorylated by TAOK2. (Microbial infection) Yersinia YopJ may acetylate Ser/Thr residues, preventing phosphorylation and activation, thus blocking the MAPK signaling pathway. In terms of tissue distribution, abundant expression is seen in the skeletal muscle. It is also widely expressed in other tissues.

The catalysed reaction is L-seryl-[protein] + ATP = O-phospho-L-seryl-[protein] + ADP + H(+). It catalyses the reaction L-threonyl-[protein] + ATP = O-phospho-L-threonyl-[protein] + ADP + H(+). It carries out the reaction L-tyrosyl-[protein] + ATP = O-phospho-L-tyrosyl-[protein] + ADP + H(+). Activated by dual phosphorylation on Ser-218 and Thr-222. In terms of biological role, dual specificity kinase. Is activated by cytokines and environmental stress in vivo. Catalyzes the concomitant phosphorylation of a threonine and a tyrosine residue in the MAP kinase p38. Part of a signaling cascade that begins with the activation of the adrenergic receptor ADRA1B and leads to the activation of MAPK14. The sequence is that of Dual specificity mitogen-activated protein kinase kinase 3 (MAP2K3) from Homo sapiens (Human).